Reading from the N-terminus, the 281-residue chain is Probable endonuclease 4 (281 aa).

Positions 69, 109, 145, 179, 182, 216, 229, 231, and 261 each coordinate Zn(2+).

The protein belongs to the AP endonuclease 2 family. Zn(2+) is required as a cofactor.

It catalyses the reaction Endonucleolytic cleavage to 5'-phosphooligonucleotide end-products.. Its function is as follows. Endonuclease IV plays a role in DNA repair. It cleaves phosphodiester bonds at apurinic or apyrimidinic (AP) sites, generating a 3'-hydroxyl group and a 5'-terminal sugar phosphate. The protein is Probable endonuclease 4 of Proteus mirabilis (strain HI4320).